We begin with the raw amino-acid sequence, 176 residues long: Small ribosomal subunit protein uS5 (176 aa).

The region spanning 11 to 74 (LSEVLVDVNR…QAAKKKMMKV (64 aa)) is the S5 DRBM domain.

It belongs to the universal ribosomal protein uS5 family. Part of the 30S ribosomal subunit. Contacts proteins S4 and S8.

Its function is as follows. With S4 and S12 plays an important role in translational accuracy. In terms of biological role, located at the back of the 30S subunit body where it stabilizes the conformation of the head with respect to the body. The sequence is that of Small ribosomal subunit protein uS5 from Rickettsia bellii (strain RML369-C).